The primary structure comprises 868 residues: Leucine--tRNA ligase (868 aa).

The 'HIGH' region signature appears at 42-52; it reads PYPSGKLHMGH. The 'KMSKS' region signature appears at 627 to 631; sequence KMSKS. Residue K630 coordinates ATP.

This sequence belongs to the class-I aminoacyl-tRNA synthetase family.

The protein resides in the cytoplasm. It catalyses the reaction tRNA(Leu) + L-leucine + ATP = L-leucyl-tRNA(Leu) + AMP + diphosphate. The protein is Leucine--tRNA ligase of Pseudomonas putida (strain GB-1).